Reading from the N-terminus, the 663-residue chain is Zyxin (663 aa).

Residues 35–438 form a disordered region; that stretch reads PPKPKINPFK…QQDQTLGSQG (404 aa). Composition is skewed to pro residues over residues 122 to 148 and 160 to 211; these read FPPPPPPEFSEPFPPPIEEFFPSPPPL and VPVP…PPSV. A compositionally biased stretch (polar residues) spans 298 to 314; the sequence is PQKTTEPPAEASQSSPK. 2 stretches are compositionally biased toward basic and acidic residues: residues 342-353 and 360-375; these read QRERPRVLEKPR and EPEHEPTVEVQVERTR. 2 stretches are compositionally biased toward polar residues: residues 377–393 and 427–438; these read LGPQTESGRSPGAQSTG and TGQQDQTLGSQG. LIM zinc-binding domains lie at 470-531, 532-589, and 590-660; these read ELCG…TLEC, CAVC…RRYA, and PRCC…RARA.

It belongs to the zyxin/ajuba family. In terms of assembly, interacts (via LIM2 domain) with hesx1/anf1. At the early gastrula stage, expressed at a low level in the animal hemisphere. Expression rises by the end of gastrulation in the anterior part of the embryo, where it gradually increases by the midneurula stage. During neurulation, expression continues most intensively in the anterior part of the neural plate and around it. At later stages, intensely expressed in the brain and at lower levels in the spinal cord, eyes, nasal placodes, within somites, and around the cement gland.

It localises to the cytoplasm. The protein resides in the cytoskeleton. Its subcellular location is the cell junction. The protein localises to the focal adhesion. In terms of biological role, adhesion plaque protein. May be a component of a signal transduction pathway that mediates adhesion-stimulated changes in gene expression. Suppresses the transcription-repressing activity of hesx1/anf1. This Xenopus laevis (African clawed frog) protein is Zyxin.